Reading from the N-terminus, the 255-residue chain is Tumor necrosis factor receptor superfamily member 9 (255 aa).

The N-terminal stretch at 1-23 (MGNSCYNIVATLLLVLNFERTRS) is a signal peptide. 4 TNFR-Cys repeats span residues 24 to 45 (LQDP…NQIC), 47 to 86 (PCPP…NAEC), 87 to 118 (DCTP…KGCK), and 119 to 159 (DCCF…VVCG). At 24–186 (LQDPCSNCPA…PAREPGHSPQ (163 aa)) the chain is on the extracellular side. Intrachain disulfides connect Cys-28–Cys-37, Cys-31–Cys-45, Cys-48–Cys-62, Cys-65–Cys-78, Cys-68–Cys-86, Cys-88–Cys-94, Cys-99–Cys-106, Cys-102–Cys-117, and Cys-121–Cys-133. Asn-138 and Asn-149 each carry an N-linked (GlcNAc...) asparagine glycan. A disulfide bridge connects residues Cys-139 and Cys-158. The segment at 161 to 180 (SPADLSPGASSVTPPAPARE) is disordered. Residues 187–213 (IISFFLALTSTALLFLLFFLTLRFSVV) form a helical membrane-spanning segment. Residues 214–255 (KRGRKKLLYIFKQPFMRPVQTTQEEDGCSCRFPEEEEGGCEL) lie on the Cytoplasmic side of the membrane. Positions 214-255 (KRGRKKLLYIFKQPFMRPVQTTQEEDGCSCRFPEEEEGGCEL) are interaction with LRR-1.

Predominantly homodimeric, but may also exist as a monomer. Interacts with TRAF1, TRAF2 and TRAF3. Interacts with LRR-repeat protein 1/LRR-1. As to expression, expressed on the surface of activated T-cells.

Its subcellular location is the cell membrane. Functionally, receptor for TNFSF9/4-1BBL. Conveys a signal that enhances CD8(+) T-cell survival, cytotoxicity, and mitochondrial activity, thereby promoting immunity against viruses and tumors. This is Tumor necrosis factor receptor superfamily member 9 (TNFRSF9) from Homo sapiens (Human).